We begin with the raw amino-acid sequence, 1588 residues long: RB1-inducible coiled-coil protein 1 (1588 aa).

Residues S222, S229, and S237 each carry the phosphoserine modification. A Phosphothreonine modification is found at T238. A phosphoserine mark is found at S243, S253, S257, and S261. The Nuclear localization signal signature appears at K565 to K568. A phosphoserine mark is found at S623, S646, S649, S652, S733, S1087, S1366, and S1478. A disordered region spans residues Q638–T674. Positions S643–P667 are enriched in low complexity. An FFAT motif is present at residues D730–N736. Coiled coils occupy residues L858–F1393 and S1440–L1479.

In terms of assembly, part of a complex containing ATG13/KIAA0652, ULK1 and RB1CC1. This complex associates with ATG101. Interacts with PTK2/FAK1 and PTK2B/PYK2. Interacts with GABARAP and GABARAPL1. Interacts with ATG16L1; the interaction is required for ULK1 complex-dependent autophagy. Interacts with RNF111, SKI and SMAD7. Interacts with COP1 in the cytoplasm of proliferating cells in response to UV stimulation. Interacts with TP53. Interacts with C9orf72. Interacts with WDR45B. Interacts with ATG13; this interaction is increased in the absence of TMEM39A. Interacts with WIPI2. Interacts with TAX1BP1. Interacts (via phosphorylated FFAT motif) with MOSPD2. Post-translationally, phosphorylation at Ser-733 of the FFAT motif activates interaction with MOSPD2. In terms of tissue distribution, expressed abundantly in heart and testis, and moderately in kidney, liver and skeletal muscles. Very low expression levels in lung and spleen. Colocalizes with RB1 in various tissues.

The protein resides in the nucleus. The protein localises to the cytoplasm. It localises to the cytosol. Its subcellular location is the preautophagosomal structure. It is found in the lysosome. Its function is as follows. Involved in autophagy. Regulates early events but also late events of autophagosome formation through direct interaction with Atg16L1. Required for the formation of the autophagosome-like double-membrane structure that surrounds the Salmonella-containing vacuole (SCV) during S.typhimurium infection and subsequent xenophagy. Involved in repair of DNA damage caused by ionizing radiation, which subsequently improves cell survival by decreasing apoptosis. Inhibits PTK2/FAK1 and PTK2B/PYK2 kinase activity, affecting their downstream signaling pathways. Plays a role as a modulator of TGF-beta-signaling by restricting substrate specificity of RNF111. Functions as a DNA-binding transcription factor. Is a potent regulator of the RB1 pathway through induction of RB1 expression. Plays a crucial role in muscular differentiation. Plays an indispensable role in fetal hematopoiesis and in the regulation of neuronal homeostasis. The polypeptide is RB1-inducible coiled-coil protein 1 (Mus musculus (Mouse)).